Consider the following 224-residue polypeptide: Ras-related protein Rab-11C (224 aa).

Position 17–24 (17–24 (GDSAVGKS)) interacts with GTP. Residues 39 to 47 (TKATIGVDF) carry the Effector region motif. GTP contacts are provided by residues 65–69 (DTAGQ) and 123–126 (NKSD). The tract at residues 194–224 (QGKKLTPLSDPAPQLTANTTSTHQEKKSGCC) is disordered. S-geranylgeranyl cysteine attachment occurs at residues cysteine 223 and cysteine 224.

The protein belongs to the small GTPase superfamily. Rab family.

The protein resides in the membrane. This is Ras-related protein Rab-11C (rab11C) from Dictyostelium discoideum (Social amoeba).